Here is a 193-residue protein sequence, read N- to C-terminus: Thymidylate kinase (193 aa).

Residue 7–14 (GIDGCGKS) coordinates ATP.

This sequence belongs to the thymidylate kinase family.

It catalyses the reaction dTMP + ATP = dTDP + ADP. Functionally, phosphorylation of dTMP to form dTDP in both de novo and salvage pathways of dTTP synthesis. The chain is Thymidylate kinase from Coprothermobacter proteolyticus (strain ATCC 35245 / DSM 5265 / OCM 4 / BT).